A 389-amino-acid polypeptide reads, in one-letter code: Succinate--CoA ligase [ADP-forming] subunit beta (389 aa).

Residues 9–244 enclose the ATP-grasp domain; that stretch reads KEILRKFGVA…LDEEDPAEVE (236 aa). ATP-binding positions include K46, 53–55, E99, A102, and E107; that span reads GRG. Positions 199 and 213 each coordinate Mg(2+). Residues N264 and 321 to 323 contribute to the substrate site; that span reads GIM.

Belongs to the succinate/malate CoA ligase beta subunit family. As to quaternary structure, heterotetramer of two alpha and two beta subunits. It depends on Mg(2+) as a cofactor.

It carries out the reaction succinate + ATP + CoA = succinyl-CoA + ADP + phosphate. The enzyme catalyses GTP + succinate + CoA = succinyl-CoA + GDP + phosphate. The protein operates within carbohydrate metabolism; tricarboxylic acid cycle; succinate from succinyl-CoA (ligase route): step 1/1. Functionally, succinyl-CoA synthetase functions in the citric acid cycle (TCA), coupling the hydrolysis of succinyl-CoA to the synthesis of either ATP or GTP and thus represents the only step of substrate-level phosphorylation in the TCA. The beta subunit provides nucleotide specificity of the enzyme and binds the substrate succinate, while the binding sites for coenzyme A and phosphate are found in the alpha subunit. This Paraburkholderia phytofirmans (strain DSM 17436 / LMG 22146 / PsJN) (Burkholderia phytofirmans) protein is Succinate--CoA ligase [ADP-forming] subunit beta.